The following is a 474-amino-acid chain: Probable fucosyltransferase 9 (474 aa).

The helical; Signal-anchor for type II membrane protein transmembrane segment at 1-21 threads the bilayer; it reads MIKLTIAIATCLVLCLVLLLP. The Lumenal segment spans residues 22–474; sequence SSNISYRHKY…LKLVDVSDEL (453 aa). N24, N39, and N208 each carry an N-linked (GlcNAc...) asparagine glycan.

This sequence belongs to the glycosyltransferase 37 family. In terms of tissue distribution, expressed in leaves and stems.

The protein localises to the golgi apparatus. The protein resides in the golgi stack membrane. It functions in the pathway protein modification; protein glycosylation. Its function is as follows. May be involved in cell wall biosynthesis. May act as a fucosyltransferase. This Arabidopsis thaliana (Mouse-ear cress) protein is Probable fucosyltransferase 9 (FUT9).